A 485-amino-acid chain; its full sequence is Taxane 13-alpha-hydroxylase (485 aa).

A heme-binding site is contributed by C431.

This sequence belongs to the cytochrome P450 family. Requires heme as cofactor.

The enzyme catalyses taxa-4(20),11-dien-5alpha-ol + reduced [NADPH--hemoprotein reductase] + O2 = taxa-4(20),11-dien-5alpha,13alpha-diol + oxidized [NADPH--hemoprotein reductase] + H2O + H(+). The protein operates within alkaloid biosynthesis; taxol biosynthesis. Involved in the transformation of a taxadienyl acetate by hydroxylation at C13 to yield taxadien-5-alpha-acetoxy-13-alpha-ol. The protein is Taxane 13-alpha-hydroxylase (CYP725A2) of Taxus cuspidata (Japanese yew).